A 180-amino-acid polypeptide reads, in one-letter code: NADH-quinone oxidoreductase subunit I (180 aa).

4Fe-4S ferredoxin-type domains are found at residues 50 to 80 (LTRD…LQKA) and 90 to 119 (EFFR…LTPD). 8 residues coordinate [4Fe-4S] cluster: Cys-60, Cys-63, Cys-66, Cys-70, Cys-99, Cys-102, Cys-105, and Cys-109.

Belongs to the complex I 23 kDa subunit family. NDH-1 is composed of 13 different subunits. Subunits NuoA, H, J, K, L, M, N constitute the membrane sector of the complex. [4Fe-4S] cluster is required as a cofactor.

It is found in the cell inner membrane. The enzyme catalyses a quinone + NADH + 5 H(+)(in) = a quinol + NAD(+) + 4 H(+)(out). In terms of biological role, NDH-1 shuttles electrons from NADH, via FMN and iron-sulfur (Fe-S) centers, to quinones in the respiratory chain. The immediate electron acceptor for the enzyme in this species is believed to be ubiquinone. Couples the redox reaction to proton translocation (for every two electrons transferred, four hydrogen ions are translocated across the cytoplasmic membrane), and thus conserves the redox energy in a proton gradient. This chain is NADH-quinone oxidoreductase subunit I, found in Salmonella choleraesuis (strain SC-B67).